The sequence spans 558 residues: Serine palmitoyltransferase 2 (558 aa).

Residues 33-42 are compositionally biased toward acidic residues; the sequence is HDDDEEEEEV. The segment at 33–57 is disordered; the sequence is HDDDEEEEEVKVDQGSEETTSSHDI. Lys-384 carries the post-translational modification N6-(pyridoxal phosphate)lysine.

Belongs to the class-II pyridoxal-phosphate-dependent aminotransferase family. In terms of assembly, heterodimer of sptl-1/sptl-2. Pyridoxal 5'-phosphate is required as a cofactor.

It carries out the reaction L-serine + hexadecanoyl-CoA + H(+) = 3-oxosphinganine + CO2 + CoA. It functions in the pathway lipid metabolism; sphingolipid metabolism. Its function is as follows. Component of the serine palmitoyltransferase (SPT) that catalyzes the first committed step in sphingolipid biosynthesis, which is the condensation of an acyl-CoA species and L-serine. The catalytic core is composed of a heterodimer of sptl-1 and sptl-2 or sptl-1 and sptl-3. Required for the specification of abicobasal polarity and development of the gut lumen. The polypeptide is Serine palmitoyltransferase 2 (sptl-2) (Caenorhabditis elegans).